Here is a 330-residue protein sequence, read N- to C-terminus: Ribosomal RNA small subunit methyltransferase C (330 aa).

This sequence belongs to the methyltransferase superfamily. RsmC family. As to quaternary structure, monomer.

Its subcellular location is the cytoplasm. It catalyses the reaction guanosine(1207) in 16S rRNA + S-adenosyl-L-methionine = N(2)-methylguanosine(1207) in 16S rRNA + S-adenosyl-L-homocysteine + H(+). Specifically methylates the guanine in position 1207 of 16S rRNA in the 30S particle. The polypeptide is Ribosomal RNA small subunit methyltransferase C (Haemophilus influenzae (strain 86-028NP)).